Reading from the N-terminus, the 313-residue chain is Glyoxylate/hydroxypyruvate reductase A (313 aa).

Arg-228 is an active-site residue. His-276 acts as the Proton donor in catalysis.

This sequence belongs to the D-isomer specific 2-hydroxyacid dehydrogenase family. GhrA subfamily.

The protein resides in the cytoplasm. It carries out the reaction glycolate + NADP(+) = glyoxylate + NADPH + H(+). It catalyses the reaction (R)-glycerate + NAD(+) = 3-hydroxypyruvate + NADH + H(+). The enzyme catalyses (R)-glycerate + NADP(+) = 3-hydroxypyruvate + NADPH + H(+). Catalyzes the NADPH-dependent reduction of glyoxylate and hydroxypyruvate into glycolate and glycerate, respectively. The protein is Glyoxylate/hydroxypyruvate reductase A of Photorhabdus laumondii subsp. laumondii (strain DSM 15139 / CIP 105565 / TT01) (Photorhabdus luminescens subsp. laumondii).